The primary structure comprises 236 residues: uncharacterized protein (236 aa).

The 222-residue stretch at 4-225 folds into the ABC transporter domain; that stretch reads LLEASIEQAG…TGLEGQSLLD (222 aa). 38 to 45 contributes to the ATP binding site; sequence GANGAGKS.

The protein belongs to the ABC transporter superfamily.

This is an uncharacterized protein from Bacillus subtilis (strain 168).